Here is a 260-residue protein sequence, read N- to C-terminus: Thiamine thiazole synthase (260 aa).

Residues Ser41, 60–61 (ER), Gly68, Val131, and 159–161 (HVD) each bind NAD(+). Fe cation-binding residues include Asp161 and His176. Met225 lines the NAD(+) pocket. Position 235 (Arg235) interacts with glycine.

It belongs to the THI4 family. As to quaternary structure, homooctamer; tetramer of dimers. Fe(2+) serves as cofactor.

It carries out the reaction hydrogen sulfide + glycine + NAD(+) = ADP-5-ethyl-4-methylthiazole-2-carboxylate + nicotinamide + 3 H2O + H(+). It participates in cofactor biosynthesis; thiamine diphosphate biosynthesis. Functionally, involved in the biosynthesis of the thiazole moiety of thiamine. Catalyzes the conversion of NAD and glycine to adenosine diphosphate 5-(2-hydroxyethyl)-4-methylthiazole-2-carboxylate (ADT), an adenylated thiazole intermediate, using free sulfide as a source of sulfur. The sequence is that of Thiamine thiazole synthase from Archaeoglobus fulgidus (strain ATCC 49558 / DSM 4304 / JCM 9628 / NBRC 100126 / VC-16).